The primary structure comprises 116 residues: PTS system galactose-specific EIIA component (116 aa).

A PTS EIIA type-3 domain is found at 11-109 (DDYMGVVMGI…AVEVVGQERR (99 aa)). The active-site Tele-phosphohistidine intermediate is H85. Position 85 is a phosphohistidine; by HPr (H85). D88 contributes to the Mg(2+) binding site.

Homotrimer. Requires Mg(2+) as cofactor.

Functionally, the phosphoenolpyruvate-dependent sugar phosphotransferase system (sugar PTS), a major carbohydrate active transport system, catalyzes the phosphorylation of incoming sugar substrates concomitantly with their translocation across the cell membrane. Involved in galactose transport with PtcB and Lmg_0963. This Lactococcus lactis subsp. cremoris (strain MG1363) protein is PTS system galactose-specific EIIA component.